Consider the following 243-residue polypeptide: Amphiregulin (243 aa).

A signal peptide spans 1-24 (MRTPSLSLALSVLSLLVLGSGHYA). Positions 25–96 (AGLELNGTSS…IVDDSVRVEQ (72 aa)) are excised as a propeptide. An N-linked (GlcNAc...) asparagine glycan is attached at N30. A compositionally biased stretch (polar residues) spans 55–67 (STISEMPSGSELS). 2 disordered regions span residues 55-75 (STIS…DYSE) and 98-135 (IKPK…KKKN). Positions 98-113 (IKPKENKTEGEKSSEK) are enriched in basic and acidic residues. Residue N103 is glycosylated (N-linked (GlcNAc...) asparagine). The segment covering 114 to 135 (PKRKKKGGKGGKGRRNRKKKKN) has biased composition (basic residues). Residues 133-173 (KKNPCAAKFQNFCIHGECRYIENLEVVTCHCHQDYFGERCG) form the EGF-like domain. Disulfide bonds link C137/C150, C145/C161, and C163/C172. A helical membrane pass occupies residues 190 to 213 (IALAAIIVFVSAVSVAAIGIITAV). N-linked (GlcNAc...) asparagine glycosylation is present at N236.

Belongs to the amphiregulin family. As to quaternary structure, the immature precursor interacts with CNIH.

The protein resides in the membrane. Ligand of the EGF receptor/EGFR. Autocrine growth factor as well as a mitogen for a broad range of target cells including astrocytes, Schwann cells and fibroblasts. The sequence is that of Amphiregulin (Areg) from Rattus norvegicus (Rat).